Reading from the N-terminus, the 311-residue chain is Acetyl-coenzyme A carboxylase carboxyl transferase subunit alpha (311 aa).

The 251-residue stretch at 36-286 (NLSKEISKVY…ANYFISELAE (251 aa)) folds into the CoA carboxyltransferase C-terminal domain.

Belongs to the AccA family. Acetyl-CoA carboxylase is a heterohexamer composed of biotin carboxyl carrier protein (AccB), biotin carboxylase (AccC) and two subunits each of ACCase subunit alpha (AccA) and ACCase subunit beta (AccD).

It is found in the cytoplasm. It carries out the reaction N(6)-carboxybiotinyl-L-lysyl-[protein] + acetyl-CoA = N(6)-biotinyl-L-lysyl-[protein] + malonyl-CoA. It participates in lipid metabolism; malonyl-CoA biosynthesis; malonyl-CoA from acetyl-CoA: step 1/1. Its function is as follows. Component of the acetyl coenzyme A carboxylase (ACC) complex. First, biotin carboxylase catalyzes the carboxylation of biotin on its carrier protein (BCCP) and then the CO(2) group is transferred by the carboxyltransferase to acetyl-CoA to form malonyl-CoA. This is Acetyl-coenzyme A carboxylase carboxyl transferase subunit alpha from Campylobacter concisus (strain 13826).